The sequence spans 681 residues: tRNA wybutosine-synthesizing protein 4 (681 aa).

Residues 1-11 are compositionally biased toward basic residues; that stretch reads MSNKNQRKTKS. The segment at 1–21 is disordered; the sequence is MSNKNQRKTKSKDREVRKTND. Residues Arg66, Gly92, Asp119, 165 to 166, and Glu193 each bind S-adenosyl-L-methionine; that span reads NL.

It belongs to the methyltransferase superfamily. LCMT family.

It catalyses the reaction 7-[(3S)-3-amino-3-carboxypropyl]wyosine(37) in tRNA(Phe) + S-adenosyl-L-methionine = 7-[(3S)-(3-amino-3-methoxycarbonyl)propyl]wyosine(37) in tRNA(Phe) + S-adenosyl-L-homocysteine. It carries out the reaction 7-[(3S)-(3-amino-3-methoxycarbonyl)propyl]wyosine(37) in tRNA(Phe) + S-adenosyl-L-methionine + CO2 = wybutosine(37) in tRNA(Phe) + S-adenosyl-L-homocysteine + 2 H(+). Its pathway is tRNA modification; wybutosine-tRNA(Phe) biosynthesis. Functionally, probable S-adenosyl-L-methionine-dependent methyltransferase that acts as a component of the wybutosine biosynthesis pathway. Wybutosine is a hyper modified guanosine with a tricyclic base found at the 3'-position adjacent to the anticodon of eukaryotic phenylalanine tRNA. May methylate the carboxyl group of leucine residues to form alpha-leucine ester residues. The protein is tRNA wybutosine-synthesizing protein 4 (ppm2) of Schizosaccharomyces pombe (strain 972 / ATCC 24843) (Fission yeast).